The chain runs to 427 residues: Serine--tRNA ligase (427 aa).

Residue 235–237 (TAE) coordinates L-serine. Residues 266–268 (RRE) and V282 each bind ATP. E289 is an L-serine binding site. ATP is bound at residue 353–356 (EASS). Residue S389 coordinates L-serine.

The protein belongs to the class-II aminoacyl-tRNA synthetase family. Type-1 seryl-tRNA synthetase subfamily. Homodimer. The tRNA molecule binds across the dimer.

Its subcellular location is the cytoplasm. The catalysed reaction is tRNA(Ser) + L-serine + ATP = L-seryl-tRNA(Ser) + AMP + diphosphate + H(+). The enzyme catalyses tRNA(Sec) + L-serine + ATP = L-seryl-tRNA(Sec) + AMP + diphosphate + H(+). It participates in aminoacyl-tRNA biosynthesis; selenocysteinyl-tRNA(Sec) biosynthesis; L-seryl-tRNA(Sec) from L-serine and tRNA(Sec): step 1/1. Catalyzes the attachment of serine to tRNA(Ser). Is also able to aminoacylate tRNA(Sec) with serine, to form the misacylated tRNA L-seryl-tRNA(Sec), which will be further converted into selenocysteinyl-tRNA(Sec). This chain is Serine--tRNA ligase, found in Chlorobaculum parvum (strain DSM 263 / NCIMB 8327) (Chlorobium vibrioforme subsp. thiosulfatophilum).